Here is a 262-residue protein sequence, read N- to C-terminus: Small ribosomal subunit protein eS1 (262 aa).

Belongs to the eukaryotic ribosomal protein eS1 family. Component of the small ribosomal subunit. Mature ribosomes consist of a small (40S) and a large (60S) subunit. The 40S subunit contains about 33 different proteins and 1 molecule of RNA (18S). The 60S subunit contains about 49 different proteins and 3 molecules of RNA (25S, 5.8S and 5S).

It localises to the cytoplasm. The protein is Small ribosomal subunit protein eS1 of Plasmodium knowlesi (strain H).